The chain runs to 437 residues: Bifunctional protein GlmU (437 aa).

Positions 1–223 (MHNTAVILAA…WDECRGVNSR (223 aa)) are pyrophosphorylase. Residues 8–11 (LAAG), K22, Q70, 75–76 (GT), 96–98 (YGD), G135, E149, N164, and N221 contribute to the UDP-N-acetyl-alpha-D-glucosamine site. D98 is a binding site for Mg(2+). N221 is a binding site for Mg(2+). Residues 224-244 (AELAAAEAAMQSRLRAAALAA) are linker. The N-acetyltransferase stretch occupies residues 245–437 (GVTMTAPETV…AELRMTKGKR (193 aa)). 2 residues coordinate UDP-N-acetyl-alpha-D-glucosamine: R310 and K328. Residue H340 is the Proton acceptor of the active site. 2 residues coordinate UDP-N-acetyl-alpha-D-glucosamine: Y343 and N354. Residues A357, 363 to 364 (NY), S382, A400, and R417 each bind acetyl-CoA.

This sequence in the N-terminal section; belongs to the N-acetylglucosamine-1-phosphate uridyltransferase family. The protein in the C-terminal section; belongs to the transferase hexapeptide repeat family. Homotrimer. Requires Mg(2+) as cofactor.

Its subcellular location is the cytoplasm. It carries out the reaction alpha-D-glucosamine 1-phosphate + acetyl-CoA = N-acetyl-alpha-D-glucosamine 1-phosphate + CoA + H(+). The enzyme catalyses N-acetyl-alpha-D-glucosamine 1-phosphate + UTP + H(+) = UDP-N-acetyl-alpha-D-glucosamine + diphosphate. Its pathway is nucleotide-sugar biosynthesis; UDP-N-acetyl-alpha-D-glucosamine biosynthesis; N-acetyl-alpha-D-glucosamine 1-phosphate from alpha-D-glucosamine 6-phosphate (route II): step 2/2. It participates in nucleotide-sugar biosynthesis; UDP-N-acetyl-alpha-D-glucosamine biosynthesis; UDP-N-acetyl-alpha-D-glucosamine from N-acetyl-alpha-D-glucosamine 1-phosphate: step 1/1. It functions in the pathway bacterial outer membrane biogenesis; LPS lipid A biosynthesis. In terms of biological role, catalyzes the last two sequential reactions in the de novo biosynthetic pathway for UDP-N-acetylglucosamine (UDP-GlcNAc). The C-terminal domain catalyzes the transfer of acetyl group from acetyl coenzyme A to glucosamine-1-phosphate (GlcN-1-P) to produce N-acetylglucosamine-1-phosphate (GlcNAc-1-P), which is converted into UDP-GlcNAc by the transfer of uridine 5-monophosphate (from uridine 5-triphosphate), a reaction catalyzed by the N-terminal domain. This is Bifunctional protein GlmU from Acidiphilium cryptum (strain JF-5).